Reading from the N-terminus, the 448-residue chain is Potassium/proton antiporter CemA (448 aa).

Transmembrane regions (helical) follow at residues 224–244 (ALAS…ISML), 325–345 (IILH…LFII), 373–393 (ILLL…EIVI), and 408–428 (IISC…KYWI).

It belongs to the CemA family.

It is found in the plastid. It localises to the chloroplast inner membrane. The catalysed reaction is K(+)(in) + H(+)(out) = K(+)(out) + H(+)(in). Its function is as follows. Contributes to K(+)/H(+) antiport activity by supporting proton efflux to control proton extrusion and homeostasis in chloroplasts in a light-dependent manner to modulate photosynthesis. Prevents excessive induction of non-photochemical quenching (NPQ) under continuous-light conditions. Indirectly promotes efficient inorganic carbon uptake into chloroplasts. The polypeptide is Potassium/proton antiporter CemA (Angiopteris evecta (Mule's foot fern)).